The chain runs to 299 residues: MKIGSHVSLSGKKMLLGASEEAASYGATTMMVYTGAPQNTRRKPISDLRIPEALLHMEENGIEEIVVHAPYIINLGNTTKPETFELAVSFLGEEIRRAEALEKAKHIVLHPGAHVGAGEEVGIKRIIEGLNEVLTGDEKVKIALETMAGKGSEIGKTFEEIAAIIAGVTHNDRLSVCLDTCHVHDAGYDLIHDLDGVLESFDRIVGINRLGVIHVNDSKNIRGAKKDRHENIGFGEIGFDPLHRIVHHRDLAHLPKILETPYIGLDPRKKVAPYREEIAMLRSGNFDAEWRLPLIGTSI.

Positions 68, 110, 145, 179, 182, 214, 227, 229, and 259 each coordinate Zn(2+).

The protein belongs to the AP endonuclease 2 family. The cofactor is Zn(2+).

The enzyme catalyses Endonucleolytic cleavage to 5'-phosphooligonucleotide end-products.. Its function is as follows. Endonuclease IV plays a role in DNA repair. It cleaves phosphodiester bonds at apurinic or apyrimidinic (AP) sites, generating a 3'-hydroxyl group and a 5'-terminal sugar phosphate. This chain is Probable endonuclease 4, found in Exiguobacterium sibiricum (strain DSM 17290 / CCUG 55495 / CIP 109462 / JCM 13490 / 255-15).